The following is a 301-amino-acid chain: Protein ARMCX6 (301 aa).

The tract at residues M1–E6 is mitochondrion outer membrane (MOM)-targeting sequence. The Mitochondrial intermembrane portion of the chain corresponds to M1–M7. Residues G8–Y25 form a helical; Signal-anchor membrane-spanning segment. Residues K26 to E36 form a mitochondrion outer membrane (MOM)-targeting sequence region. The Cytoplasmic segment spans residues K26–P301. The segment at S70–F105 is disordered.

This sequence belongs to the eutherian X-chromosome-specific Armcx family.

It is found in the mitochondrion. The protein localises to the mitochondrion outer membrane. Functionally, may regulate the dynamics and distribution of mitochondria in neural cells. This Rattus norvegicus (Rat) protein is Protein ARMCX6 (Armcx6).